The sequence spans 887 residues: 3-hydroxy-3-methylglutaryl-coenzyme A reductase (887 aa).

The Cytoplasmic portion of the chain corresponds to 1–9; that stretch reads MLSRLFRMH. The chain crosses the membrane as a helical span at residues 10 to 39; sequence GLFVASHPWEVIVGTVTLTICMMSMNMFTG. Topologically, residues 40–56 are lumenal; the sequence is NNKICGWNYECPKFEED. A helical transmembrane segment spans residues 57–78; the sequence is VLSSDIIILTITRCIAILYIYF. The SSD domain occupies 61 to 218; that stretch reads DIIILTITRC…MTFFPACVSL (158 aa). The short motif at 75–78 is the INSIG-binding motif element; sequence YIYF. Residues 79–89 lie on the Cytoplasmic side of the membrane; it reads QFQNLRQLGSK. Residue lysine 89 forms a Glycyl lysine isopeptide (Lys-Gly) (interchain with G-Cter in ubiquitin) linkage. The helical transmembrane segment at 90 to 114 threads the bilayer; it reads YILGIAGLFTIFSSFVFSTVVIHFL. The Lumenal segment spans residues 115–123; the sequence is DKELTGLNE. Residues 124 to 149 traverse the membrane as a helical segment; sequence ALPFFLLLIDLSRASALAKFALSSNS. At 150 to 159 the chain is on the cytoplasmic side; that stretch reads QDEVRENIAR. A helical membrane pass occupies residues 160-187; it reads GMAILGPTFTLDALVECLVIGVGTMSGV. Residues 188-191 lie on the Lumenal side of the membrane; that stretch reads RQLE. Residues 192 to 220 form a helical membrane-spanning segment; sequence IMCCFGCMSVLANYFVFMTFFPACVSLVL. Over 221–248 the chain is Cytoplasmic; sequence ELSRESREGRPIWQLSHFARVLEEEENK. Residue lysine 248 forms a Glycyl lysine isopeptide (Lys-Gly) (interchain with G-Cter in ubiquitin) linkage. A helical membrane pass occupies residues 249–275; it reads PNPVTQRVKMIMSLGLVLVHAHSRWIA. At 276 to 314 the chain is on the lumenal side; that stretch reads DPSPQNSTTEHSKVSLGLDEDVSKRIEPSVSLWQFYLSK. N-linked (GlcNAc...) asparagine glycosylation is present at asparagine 281. The helical transmembrane segment at 315-339 threads the bilayer; sequence MISMDIEQVVTLSLAFLLAVKYIFF. Over 340 to 887 the chain is Cytoplasmic; it reads EQAETESTLS…LQGTCTKKSA (548 aa). Residues glutamate 558, lysine 690, and aspartate 766 each act as charge relay system in the active site. The Proton donor role is filled by histidine 865. Serine 871 bears the Phosphoserine; by AMPK mark.

This sequence belongs to the HMG-CoA reductase family. In terms of assembly, homotetramer. Homodimer. Interacts (via its SSD) with INSIG1; the interaction, accelerated by sterols, leads to the recruitment of HMGCR to AMFR/gp78 for its ubiquitination by the sterol-mediated ERAD pathway. Interacts with UBIAD1. In terms of processing, N-glycosylated. Glycosylated with high mannose chains including Man(6)(GlcNAc)(2), Man(7)(GlcNAc)(2) and Man(8)(GlcNAc)(2). Deglycosylated by NGLY1 on release from the endoplasmic reticulum (ER) in a sterol-mediated manner. Undergoes sterol-mediated ubiquitination and ER-associated degradation (ERAD). Accumulation of sterols in the endoplasmic reticulum (ER) membrane, triggers binding of the reductase to the ER membrane protein INSIG1 or INSIG2. The INSIG1 binding leads to the recruitment of the ubiquitin ligase, AMFR/gp78, RNF139 or RNF145, initiating ubiquitination of the reductase. The ubiquitinated reductase is then extracted from the ER membrane and delivered to cytosolic 26S proteosomes by a mechanism probably mediated by the ATPase Valosin-containing protein VCP/p97. The INSIG2-binding leads to the recruitment of the ubiquitin ligase RNF139, initiating ubiquitination of the reductase. Lys-248 is the main site of ubiquitination. Ubiquitination is enhanced by the presence of a geranylgeranylated protein. Post-translationally, phosphorylated. Phosphorylation at Ser-871 reduces the catalytic activity.

Its subcellular location is the endoplasmic reticulum membrane. The protein localises to the peroxisome membrane. The catalysed reaction is (R)-mevalonate + 2 NADP(+) + CoA = (3S)-3-hydroxy-3-methylglutaryl-CoA + 2 NADPH + 2 H(+). Its pathway is metabolic intermediate biosynthesis; (R)-mevalonate biosynthesis; (R)-mevalonate from acetyl-CoA: step 3/3. With respect to regulation, regulated by a negative feedback mechanism through sterols and non-sterol metabolites derived from mevalonate. Phosphorylation at Ser-871 down-regulates the catalytic activity. In terms of biological role, catalyzes the conversion of (3S)-hydroxy-3-methylglutaryl-CoA (HMG-CoA) to mevalonic acid, the rate-limiting step in the synthesis of cholesterol and other isoprenoids, thus plays a critical role in cellular cholesterol homeostasis. The chain is 3-hydroxy-3-methylglutaryl-coenzyme A reductase (HMGCR) from Cricetulus griseus (Chinese hamster).